Here is an 804-residue protein sequence, read N- to C-terminus: Protein-lysine N-methyltransferase SMYD4 (804 aa).

112 to 114 provides a ligand contact to S-adenosyl-L-methionine; sequence RSA. Positions 233–574 constitute an SET domain; that stretch reads SSIGLCVDPL…KGQEILHCYG (342 aa). Residues Cys-296, Cys-299, Cys-309, Cys-312, Cys-318, Cys-322, His-331, and Cys-335 each contribute to the Zn(2+) site. The MYND-type zinc-finger motif lies at 296–335; that stretch reads CHRCLKHTLATVPCDGCSYAKYCSQECLQQAWELYHRTEC. S-adenosyl-L-methionine-binding positions include Asn-427, 539-540, Tyr-573, and Phe-595; that span reads NH.

Belongs to the class V-like SAM-binding methyltransferase superfamily. As to quaternary structure, interacts (via MYND-type zinc finger) with HDAC1.

It localises to the nucleus. The protein localises to the cytoplasm. It carries out the reaction L-lysyl-[protein] + S-adenosyl-L-methionine = N(6)-methyl-L-lysyl-[protein] + S-adenosyl-L-homocysteine + H(+). Its function is as follows. Protein-lysine N-methyltransferase. Monomethylates PRMT5, modulating its transcriptional activity. May also act as a histone methyltransferase. Plays a critical role in cardiac development. Acts as a key epigenetic regulator of gene expression during cardiac development via its dual activities as a methyltransferase and negative regulator of HDAC1. The polypeptide is Protein-lysine N-methyltransferase SMYD4 (Homo sapiens (Human)).